Consider the following 335-residue polypeptide: Glyceraldehyde-3-phosphate dehydrogenase 2 (335 aa).

NAD(+) is bound by residues 13–14 (RI), Asp-34, and Met-79. D-glyceraldehyde 3-phosphate is bound by residues 151 to 153 (SCT), Thr-182, 211 to 212 (TG), and Arg-234. Cys-152 acts as the Nucleophile in catalysis. Asn-316 is an NAD(+) binding site.

It belongs to the glyceraldehyde-3-phosphate dehydrogenase family. Homotetramer.

It is found in the cytoplasm. It catalyses the reaction D-glyceraldehyde 3-phosphate + phosphate + NAD(+) = (2R)-3-phospho-glyceroyl phosphate + NADH + H(+). It functions in the pathway carbohydrate degradation; glycolysis; pyruvate from D-glyceraldehyde 3-phosphate: step 1/5. Glyceraldehyde-3-phosphate dehydrogenase is a key enzyme in glycolysis that catalyzes the first step of the pathway by converting D-glyceraldehyde 3-phosphate (G3P) into 3-phospho-D-glyceroyl phosphate. The polypeptide is Glyceraldehyde-3-phosphate dehydrogenase 2 (gapdh-2) (Danio rerio (Zebrafish)).